Reading from the N-terminus, the 365-residue chain is Donuts protein 1 (365 aa).

The disordered stretch occupies residues 28-49; the sequence is NSGLELPSQDYTNVEEKESSPK. Residues 82–125 enclose the CUE domain; that stretch reads EKLCVLKELKIAFPEVDDTLIKAILIASQGVLEPAFNSLLYYSS. Disordered regions lie at residues 215–246 and 286–335; these read HNTILSNEDSILKGKEKGKEEEKEKGEEKGVN and ESEE…YKSA. Over residues 224-244 the composition is skewed to basic and acidic residues; it reads SILKGKEKGKEEEKEKGEEKG. The span at 286–295 shows a compositional bias: acidic residues; sequence ESEEEEEQDV. Residues 315–331 show a composition bias toward basic and acidic residues; sequence EAQRDSADRLPAKDDGG.

May interact directly with ADY3. Probable component of a spindle pole body (SPB) complex composed of ADY3, SSP1, DON1, MPC54, SPO21/MPC70, NUD1 and CNM67.

The protein resides in the prospore membrane. Functionally, involved in the pathway that organizes the prospore membrane (PSM) during sporulation. This is Donuts protein 1 (DON1) from Saccharomyces cerevisiae (strain ATCC 204508 / S288c) (Baker's yeast).